A 512-amino-acid chain; its full sequence is Alpha-amylase 1 (512 aa).

The first 25 residues, 1-25 (MRFSTEGFTSKVVAAILAFSRLVSA), serve as a signal peptide directing secretion. A disulfide bridge connects residues Cys-66 and Cys-74. Residue Trp-119 coordinates substrate. Asn-157 is a binding site for Ca(2+). His-158 lines the substrate pocket. Cys-186 and Cys-200 are disulfide-bonded. Residues Glu-198 and Asp-211 each contribute to the Ca(2+) site. Residue Asn-233 is glycosylated (N-linked (GlcNAc...) asparagine). Arg-240 is a binding site for substrate. Ca(2+) is bound by residues Asp-242, His-246, and Glu-266. Asp-242 (nucleophile) is an active-site residue. 245–246 (KH) is a substrate binding site. The active-site Proton donor is the Glu-266. Residue Gly-270 participates in substrate binding. Cys-276 and Cys-319 are oxidised to a cystine. Substrate contacts are provided by Asp-333 and Arg-380. An intrachain disulfide couples Cys-475 to Cys-510.

This sequence belongs to the glycosyl hydrolase 13 family. The cofactor is Ca(2+).

Its subcellular location is the secreted. The enzyme catalyses Endohydrolysis of (1-&gt;4)-alpha-D-glucosidic linkages in polysaccharides containing three or more (1-&gt;4)-alpha-linked D-glucose units.. Alpha-amylase expression underlies catabolite repression by glucose. The sequence is that of Alpha-amylase 1 (AMY1) from Schwanniomyces occidentalis (Yeast).